The chain runs to 299 residues: GTPase Era (299 aa).

Positions 4 to 171 (KSGFVAILGR…VDILSENLDE (168 aa)) constitute an Era-type G domain. Residues 12-19 (GRPNVGKS) are G1. A GTP-binding site is contributed by 12-19 (GRPNVGKS). A G2 region spans residues 38 to 42 (QTTRN). The segment at 59 to 62 (DTPG) is G3. GTP-binding positions include 59-63 (DTPGI) and 121-124 (NKID). Residues 121-124 (NKID) are G4. The segment at 150 to 152 (ISA) is G5. Positions 202–280 (TREEIPHSVA…FLETWVKVKK (79 aa)) constitute a KH type-2 domain.

The protein belongs to the TRAFAC class TrmE-Era-EngA-EngB-Septin-like GTPase superfamily. Era GTPase family. In terms of assembly, monomer.

It is found in the cytoplasm. Its subcellular location is the cell membrane. Functionally, an essential GTPase that binds both GDP and GTP, with rapid nucleotide exchange. Plays a role in 16S rRNA processing and 30S ribosomal subunit biogenesis and possibly also in cell cycle regulation and energy metabolism. The polypeptide is GTPase Era (Streptococcus pneumoniae (strain P1031)).